The primary structure comprises 80 residues: UPF0181 protein SG1330 (80 aa).

Positions 58–80 are disordered; the sequence is TEVLETPAARAETDPYDSNPDDD.

It belongs to the UPF0181 family.

This chain is UPF0181 protein SG1330, found in Sodalis glossinidius (strain morsitans).